Consider the following 427-residue polypeptide: Bifunctional enzyme MtnB/MtnX (427 aa).

The interval 1–221 (MRKPLIICDF…LEETAEVKEW (221 aa)) is HK-MTPenyl-1-P phosphatase. The segment at 222–427 (MSEQKRQELA…KLKALQAYHV (206 aa)) is MTRu-1-P dehydratase. The Zn(2+) site is built by histidine 317 and histidine 319.

In the N-terminal section; belongs to the HAD-like hydrolase superfamily. MtnX family. The protein in the C-terminal section; belongs to the aldolase class II family. MtnB subfamily. In terms of assembly, homotetramer. The cofactor is Zn(2+).

It carries out the reaction 5-(methylsulfanyl)-D-ribulose 1-phosphate = 5-methylsulfanyl-2,3-dioxopentyl phosphate + H2O. It catalyses the reaction 2-hydroxy-5-methylsulfanyl-3-oxopent-1-enyl phosphate + H2O = 1,2-dihydroxy-5-(methylsulfanyl)pent-1-en-3-one + phosphate. Its pathway is amino-acid biosynthesis; L-methionine biosynthesis via salvage pathway; L-methionine from S-methyl-5-thio-alpha-D-ribose 1-phosphate: step 2/6. The protein operates within amino-acid biosynthesis; L-methionine biosynthesis via salvage pathway; L-methionine from S-methyl-5-thio-alpha-D-ribose 1-phosphate: step 4/6. Catalyzes the dehydration of methylthioribulose-1-phosphate (MTRu-1-P) into 2,3-diketo-5-methylthiopentyl-1-phosphate (DK-MTP-1-P). Its function is as follows. Dephosphorylates 2-hydroxy-3-keto-5-methylthiopentenyl-1-phosphate (HK-MTPenyl-1-P) yielding 1,2-dihydroxy-3-keto-5-methylthiopentene (DHK-MTPene). This chain is Bifunctional enzyme MtnB/MtnX (mtnB/mtnX), found in Bacillus licheniformis (strain ATCC 14580 / DSM 13 / JCM 2505 / CCUG 7422 / NBRC 12200 / NCIMB 9375 / NCTC 10341 / NRRL NRS-1264 / Gibson 46).